The chain runs to 629 residues: 1-deoxy-D-xylulose-5-phosphate synthase (629 aa).

Thiamine diphosphate is bound by residues H73 and 114–116 (GHA). Position 145 (D145) interacts with Mg(2+). Thiamine diphosphate is bound by residues 146–147 (GA), N174, Y284, and E360. A Mg(2+)-binding site is contributed by N174.

Belongs to the transketolase family. DXPS subfamily. As to quaternary structure, homodimer. Mg(2+) is required as a cofactor. Thiamine diphosphate serves as cofactor.

The catalysed reaction is D-glyceraldehyde 3-phosphate + pyruvate + H(+) = 1-deoxy-D-xylulose 5-phosphate + CO2. It participates in metabolic intermediate biosynthesis; 1-deoxy-D-xylulose 5-phosphate biosynthesis; 1-deoxy-D-xylulose 5-phosphate from D-glyceraldehyde 3-phosphate and pyruvate: step 1/1. Its function is as follows. Catalyzes the acyloin condensation reaction between C atoms 2 and 3 of pyruvate and glyceraldehyde 3-phosphate to yield 1-deoxy-D-xylulose-5-phosphate (DXP). This is 1-deoxy-D-xylulose-5-phosphate synthase from Thermomicrobium roseum (strain ATCC 27502 / DSM 5159 / P-2).